Reading from the N-terminus, the 245-residue chain is 4-hydroxy-tetrahydrodipicolinate reductase (245 aa).

Residues 7–12 (GARGKV), 75–77 (GTT), and 102–105 (APNF) contribute to the NAD(+) site. His132 acts as the Proton donor/acceptor in catalysis. (S)-2,3,4,5-tetrahydrodipicolinate is bound at residue His133. The active-site Proton donor is the Lys136. 142–143 (GT) is a (S)-2,3,4,5-tetrahydrodipicolinate binding site.

It belongs to the DapB family.

It localises to the cytoplasm. The catalysed reaction is (S)-2,3,4,5-tetrahydrodipicolinate + NAD(+) + H2O = (2S,4S)-4-hydroxy-2,3,4,5-tetrahydrodipicolinate + NADH + H(+). The enzyme catalyses (S)-2,3,4,5-tetrahydrodipicolinate + NADP(+) + H2O = (2S,4S)-4-hydroxy-2,3,4,5-tetrahydrodipicolinate + NADPH + H(+). It participates in amino-acid biosynthesis; L-lysine biosynthesis via DAP pathway; (S)-tetrahydrodipicolinate from L-aspartate: step 4/4. Functionally, catalyzes the conversion of 4-hydroxy-tetrahydrodipicolinate (HTPA) to tetrahydrodipicolinate. This is 4-hydroxy-tetrahydrodipicolinate reductase from Mycolicibacterium smegmatis (strain ATCC 700084 / mc(2)155) (Mycobacterium smegmatis).